A 329-amino-acid polypeptide reads, in one-letter code: Glycerol-3-phosphate dehydrogenase [NAD(P)+] (329 aa).

NADPH contacts are provided by S13, W14, H34, and K105. Sn-glycerol 3-phosphate is bound by residues K105, G134, and S136. Position 138 (A138) interacts with NADPH. Sn-glycerol 3-phosphate is bound by residues K189, D242, S252, R253, and N254. Catalysis depends on K189, which acts as the Proton acceptor. Residue R253 coordinates NADPH. Residues V277 and E279 each coordinate NADPH.

Belongs to the NAD-dependent glycerol-3-phosphate dehydrogenase family.

The protein localises to the cytoplasm. The enzyme catalyses sn-glycerol 3-phosphate + NAD(+) = dihydroxyacetone phosphate + NADH + H(+). It carries out the reaction sn-glycerol 3-phosphate + NADP(+) = dihydroxyacetone phosphate + NADPH + H(+). It participates in membrane lipid metabolism; glycerophospholipid metabolism. Catalyzes the reduction of the glycolytic intermediate dihydroxyacetone phosphate (DHAP) to sn-glycerol 3-phosphate (G3P), the key precursor for phospholipid synthesis. This Legionella pneumophila (strain Corby) protein is Glycerol-3-phosphate dehydrogenase [NAD(P)+].